The chain runs to 511 residues: D-alanine--D-alanyl carrier protein ligase (511 aa).

Residue 152-153 (TS) coordinates ATP. Position 199 (Asp199) interacts with D-alanine. 294–299 (NAYGPT) is an ATP binding site. Val303 is a D-alanine binding site. ATP contacts are provided by residues Asp385, 397–400 (YGGR), and Lys499. Lys499 is a D-alanine binding site.

The protein belongs to the ATP-dependent AMP-binding enzyme family. DltA subfamily.

The protein resides in the cytoplasm. It carries out the reaction holo-[D-alanyl-carrier protein] + D-alanine + ATP = D-alanyl-[D-alanyl-carrier protein] + AMP + diphosphate. It functions in the pathway cell wall biogenesis; lipoteichoic acid biosynthesis. In terms of biological role, catalyzes the first step in the D-alanylation of lipoteichoic acid (LTA), the activation of D-alanine and its transfer onto the D-alanyl carrier protein (Dcp) DltC. In an ATP-dependent two-step reaction, forms a high energy D-alanyl-AMP intermediate, followed by transfer of the D-alanyl residue as a thiol ester to the phosphopantheinyl prosthetic group of the Dcp. D-alanylation of LTA plays an important role in modulating the properties of the cell wall in Gram-positive bacteria, influencing the net charge of the cell wall. The chain is D-alanine--D-alanyl carrier protein ligase from Streptococcus agalactiae serotype V (strain ATCC BAA-611 / 2603 V/R).